The sequence spans 45 residues: Bomanin Short 1 (45 aa).

The first 20 residues, 1–20, serve as a signal peptide directing secretion; sequence MKFFSVVTVFVLGLLAVANA. Positions 21-27 are cleaved as a propeptide — removed by a dipeptidylpeptidase; it reads VPLSPDP. A disulfide bridge connects residues C36 and C39. G43 is modified (glycine amide).

Hemolymph (at protein level).

The protein localises to the secreted. Secreted immune-induced peptide induced by Toll signaling. Has a role in resistance to bacterial and fungal infections. Has no activity against the fungus C.glabrata in vitro. The sequence is that of Bomanin Short 1 from Drosophila melanogaster (Fruit fly).